Reading from the N-terminus, the 547-residue chain is Chaperonin GroEL (547 aa).

ATP is bound by residues 30–33, Lys51, 87–91, Gly415, 479–481, and Asp495; these read TLGP, DGTTT, and DAA.

Belongs to the chaperonin (HSP60) family. Forms a cylinder of 14 subunits composed of two heptameric rings stacked back-to-back. Interacts with the co-chaperonin GroES.

Its subcellular location is the cytoplasm. The enzyme catalyses ATP + H2O + a folded polypeptide = ADP + phosphate + an unfolded polypeptide.. In terms of biological role, together with its co-chaperonin GroES, plays an essential role in assisting protein folding. The GroEL-GroES system forms a nano-cage that allows encapsulation of the non-native substrate proteins and provides a physical environment optimized to promote and accelerate protein folding. This chain is Chaperonin GroEL, found in Dichelobacter nodosus (strain VCS1703A).